A 949-amino-acid polypeptide reads, in one-letter code: MAM domain-containing glycosylphosphatidylinositol anchor protein 1 (949 aa).

An N-terminal signal peptide occupies residues 1–18; that stretch reads MEMICVLFLSLVPAYSRG. Ig-like domains are found at residues 24 to 125 and 132 to 230; these read PAQA…IRVD and PVLT…KSIT. Residues Asn-42 and Asn-90 are each glycosylated (N-linked (GlcNAc...) asparagine). Disulfide bonds link Cys-60/Cys-108 and Cys-157/Cys-214. Asn-235, Asn-247, Asn-257, Asn-292, Asn-307, and Asn-331 each carry an N-linked (GlcNAc...) asparagine glycan. The Ig-like 3 domain maps to 240-323; the sequence is PALKLSVNET…VGNPAKKTVN (84 aa). Cys-262 and Cys-308 are oxidised to a cystine. Ig-like domains lie at 338–432, 440–531, and 537–625; these read PDVI…VEVN, PTIS…ALVQ, and PPVV…FQVS. Cysteines 357 and 415 form a disulfide. Asn-432 carries N-linked (GlcNAc...) asparagine glycosylation. 2 disulfide bridges follow: Cys-463–Cys-513 and Cys-559–Cys-609. N-linked (GlcNAc...) asparagine glycans are attached at residues Asn-577, Asn-649, and Asn-820. Residues 637 to 737 enclose the Fibronectin type-III domain; the sequence is TPNPTLSQKQ…ARIIRYMEPI (101 aa). Positions 745–912 constitute an MAM domain; that stretch reads NTCRFEDEKI…VTLKKGDCPR (168 aa). Ser-926 carries the GPI-anchor amidated serine lipid modification. The propeptide at 927 to 949 is removed in mature form; it reads GVSAQHGPCLCGPLTFFLYVLLR.

Interacts heterophilically through its MAM domain with proteins in axon-rich regions and through its Ig-like domains with proteins in differentiating muscle. In the embryonic brachial spinal cord, selectively expressed by medial lateral motor column neurons, some populations of dorsal root ganglion neurons, and interneurons.

The protein resides in the cell membrane. Its function is as follows. Required for radial migration of cortical neurons in the superficial layer of the neocortex. This is MAM domain-containing glycosylphosphatidylinositol anchor protein 1 from Gallus gallus (Chicken).